A 966-amino-acid polypeptide reads, in one-letter code: Probable LIM domain-containing serine/threonine-protein kinase DDB_G0286997 (966 aa).

2 LIM zinc-binding domains span residues 3 to 62 and 63 to 120; these read SRCG…LNAP and KCFK…KPPP. 2 disordered regions span residues 208-291 and 331-588; these read YSLS…PTED and PLNQ…EQQV. Over residues 211–231 the composition is skewed to low complexity; the sequence is SSPSSSSSSSSSSSSSSSSPP. Over residues 232–269 the composition is skewed to polar residues; the sequence is NTFNKSSDFLRNPLNNNVKSSSSSIGGNFVNKSQQQQQ. Low complexity-rich tracts occupy residues 270–284 and 331–350; these read PIDSCSKSSISISPS and PLNQQPQQQQQQFKPQSPNL. Over residues 374-389 the composition is skewed to polar residues; it reads TTTFSNPLLKTKNQSF. A compositionally biased stretch (pro residues) spans 419 to 430; the sequence is PLPPPPITPIPS. Over residues 431 to 449 the composition is skewed to low complexity; it reads PSSSSIIINNQQQQQQESQ. The span at 490–511 shows a compositional bias: pro residues; that stretch reads KPIVLPPPPLDMEQLPLPPPPL. Residues 513-526 are compositionally biased toward polar residues; the sequence is SSQINQSLKSTQHN. Over residues 543–560 the composition is skewed to low complexity; it reads IQKQSIPTRKPQLPQSSN. Over residues 561–570 the composition is skewed to pro residues; sequence PSPPSPPSPQ. Residues 702-959 enclose the Protein kinase domain; sequence VIFGDVIAAG…DTLKKISESL (258 aa). Residues 708-716 and K729 contribute to the ATP site; that span reads IAAGASGKV. Catalysis depends on D825, which acts as the Proton acceptor.

It belongs to the protein kinase superfamily. TKL Ser/Thr protein kinase family.

It catalyses the reaction L-seryl-[protein] + ATP = O-phospho-L-seryl-[protein] + ADP + H(+). It carries out the reaction L-threonyl-[protein] + ATP = O-phospho-L-threonyl-[protein] + ADP + H(+). This is Probable LIM domain-containing serine/threonine-protein kinase DDB_G0286997 from Dictyostelium discoideum (Social amoeba).